Reading from the N-terminus, the 428-residue chain is C4-dicarboxylate transport protein 1 (428 aa).

The next 8 membrane-spanning stretches (helical) occupy residues 5–27, 42–64, 77–99, 150–167, 188–210, 225–247, 314–336, and 351–373; these read FYKILYVQVLAAIVIGVLLGHFE, IQLIKMVIGPIIFCTVVSGIAGM, ALLYFEVVSTFALVIGLVAGHIF, ILQILLIALLFGGALSAM, IVHVITRVAPIGAFGAMAFTIGK, TFYLTAIIFVVVVLGIIARLTGF, IFISQALNIELTLTQQLTILAVA, and FITLAATLAVVPTIPVAGMVLIL.

Belongs to the dicarboxylate/amino acid:cation symporter (DAACS) (TC 2.A.23) family.

Its subcellular location is the cell inner membrane. Functionally, responsible for the transport of dicarboxylates such as succinate, fumarate, and malate from the periplasm across the membrane. This chain is C4-dicarboxylate transport protein 1 (dctA1), found in Ralstonia nicotianae (strain ATCC BAA-1114 / GMI1000) (Ralstonia solanacearum).